We begin with the raw amino-acid sequence, 170 residues long: 3-hydroxyanthranilate 3,4-dioxygenase (170 aa).

R44 is a binding site for O2. Fe cation is bound by residues H48, E54, and H92. Substrate is bound at residue E54. 2 residues coordinate substrate: R96 and E106. Positions 121, 124, 158, and 161 each coordinate a divalent metal cation.

Belongs to the 3-HAO family. It depends on Fe(2+) as a cofactor.

The protein resides in the cytoplasm. The enzyme catalyses 3-hydroxyanthranilate + O2 = (2Z,4Z)-2-amino-3-carboxymuconate 6-semialdehyde. Its pathway is cofactor biosynthesis; NAD(+) biosynthesis; quinolinate from L-kynurenine: step 3/3. Functionally, catalyzes the oxidative ring opening of 3-hydroxyanthranilate to 2-amino-3-carboxymuconate semialdehyde, which spontaneously cyclizes to quinolinate. This is 3-hydroxyanthranilate 3,4-dioxygenase from Scheffersomyces stipitis (strain ATCC 58785 / CBS 6054 / NBRC 10063 / NRRL Y-11545) (Yeast).